A 71-amino-acid polypeptide reads, in one-letter code: uncharacterized protein (71 aa).

The next 2 helical transmembrane spans lie at 9–29 (FVIF…NINF) and 41–61 (FVAL…FFGL).

The protein localises to the membrane. This is an uncharacterized protein from Acheta domesticus (House cricket).